Here is a 536-residue protein sequence, read N- to C-terminus: MEILTFIIYLITFFILFDFYKKNKRYSKSPNKEANGPWSLPIIGGLHLIGDRPNRSFSELSKIYGGIYKIWLAERMLMIVTDPEIIQDIWIKQHDKFVNRPHNITSQIFSLNHKSLVFGDVDEWNKVRPKMTCHFTKIKLNSTKPKQIVNDQLKKMLKIMTTHSLDSKPFNQYVYLNTYSMNIILGLMLSIELPHSNSNDKDGQFSKVLHSIDEIFKSIGTNGPEDIFPTLLPFFKNRISTFTNHLNVIKDFIRSIYKQQIKTFDINIEPRNIMDCLISEYYEDDDQEDEVAKQELIIQLCIDMLVAATDTSASTLEWFMLFMINNPNLQEDLYEEVVNVVGKDCPYVTFDDVPKLALIKACYFEILRIRPVTSLSLPRVSMEDTTTLNDIFIPKDTIIIQNIFGMGNSEKFVSNPTVFNPSRWLEYKKMKDLNQFGNRDDSIDTTNTTTNTTLNGTTSKYYNDLERVSIPFGVGKRRCMAPSMADHNVLIAMANIVLNFTMKSSDPKQMPLSEEEQYAITIKPKYPFKVLFEKRS.

The chain crosses the membrane as a helical span at residues 1 to 21 (MEILTFIIYLITFFILFDFYK). Cys-479 is a binding site for heme.

It belongs to the cytochrome P450 family. It depends on heme as a cofactor.

Its subcellular location is the membrane. This is Probable cytochrome P450 520A1 (cyp520A1) from Dictyostelium discoideum (Social amoeba).